We begin with the raw amino-acid sequence, 279 residues long: MTQFDKQYNSIIKDIMNNGISDEEFNVRTKWDSDGTPAHTLSVISKQMRFDNSEVPILTTKKVAWKTAIKELLWIWQLKSNDVTELNKMGVHIWDQWKQEDGTIGHAYGFQLGKKNRNLNGEKVDQVDYLLHQLKNNPSSRRHITMLWNPDELDSMALTPCVYETQWYVKQGKLHLEVRARSNDMALGNPFNVFQYNVLQRMIAQVTGYELGEYIFNIGDCHVYTRHIDNLKIQMEREQFEAPELWINPEVKDFYDFTIDDFKLFNYKHGDKLLFEVAV.

141–142 (RR) is a dUMP binding site. Catalysis depends on cysteine 161, which acts as the Nucleophile. Residues 181 to 184 (RSND), asparagine 192, and 222 to 224 (HVY) contribute to the dUMP site. (6R)-5,10-methylene-5,6,7,8-tetrahydrofolate is bound at residue aspartate 184. Alanine 278 contributes to the (6R)-5,10-methylene-5,6,7,8-tetrahydrofolate binding site.

The protein belongs to the thymidylate synthase family. Bacterial-type ThyA subfamily. Homodimer.

Its subcellular location is the cytoplasm. The enzyme catalyses dUMP + (6R)-5,10-methylene-5,6,7,8-tetrahydrofolate = 7,8-dihydrofolate + dTMP. The protein operates within pyrimidine metabolism; dTTP biosynthesis. Catalyzes the reductive methylation of 2'-deoxyuridine-5'-monophosphate (dUMP) to 2'-deoxythymidine-5'-monophosphate (dTMP) while utilizing 5,10-methylenetetrahydrofolate (mTHF) as the methyl donor and reductant in the reaction, yielding dihydrofolate (DHF) as a by-product. This enzymatic reaction provides an intracellular de novo source of dTMP, an essential precursor for DNA biosynthesis. The chain is Thymidylate synthase 1 from Bacillus spizizenii (strain ATCC 23059 / NRRL B-14472 / W23) (Bacillus subtilis subsp. spizizenii).